The primary structure comprises 338 residues: RNA 3'-terminal phosphate cyclase (338 aa).

ATP-binding positions include Gln-103 and 283 to 287 (YLADQ). His-308 functions as the Tele-AMP-histidine intermediate in the catalytic mechanism.

This sequence belongs to the RNA 3'-terminal cyclase family. Type 1 subfamily.

The protein resides in the cytoplasm. It catalyses the reaction a 3'-end 3'-phospho-ribonucleotide-RNA + ATP = a 3'-end 2',3'-cyclophospho-ribonucleotide-RNA + AMP + diphosphate. Functionally, catalyzes the conversion of 3'-phosphate to a 2',3'-cyclic phosphodiester at the end of RNA. The mechanism of action of the enzyme occurs in 3 steps: (A) adenylation of the enzyme by ATP; (B) transfer of adenylate to an RNA-N3'P to produce RNA-N3'PP5'A; (C) and attack of the adjacent 2'-hydroxyl on the 3'-phosphorus in the diester linkage to produce the cyclic end product. The biological role of this enzyme is unknown but it is likely to function in some aspects of cellular RNA processing. The protein is RNA 3'-terminal phosphate cyclase of Shigella sonnei (strain Ss046).